We begin with the raw amino-acid sequence, 202 residues long: MNKLFLILLLIFSHEVFSQTSAEVLQSKLNAIQTMTANFSQIVKAKNREVSRSSGSMALQRPGRFRWQTKDPLEQLIVADGQKMWIYDVDLEQVTVKNQEKGLGGTAALFLSGYDETLTHDFDVSEKQKGKLTVFDLKSKSAKENFQRIKLIFSQSTLIGLELYDQLGQITDVKLVQIKSNPKLPAKLFQFKPPKGVDVVKQ.

The N-terminal stretch at 1-18 is a signal peptide; sequence MNKLFLILLLIFSHEVFS.

This sequence belongs to the LolA family. As to quaternary structure, monomer.

The protein localises to the periplasm. In terms of biological role, participates in the translocation of lipoproteins from the inner membrane to the outer membrane. Only forms a complex with a lipoprotein if the residue after the N-terminal Cys is not an aspartate (The Asp acts as a targeting signal to indicate that the lipoprotein should stay in the inner membrane). The protein is Outer-membrane lipoprotein carrier protein of Legionella pneumophila (strain Corby).